The sequence spans 138 residues: Sec-independent protein translocase protein TatB (138 aa).

A helical transmembrane segment spans residues 1 to 21 (MFDIGATELLVIAIVAILVIG). The disordered stretch occupies residues 74-138 (MAKHPADQMQ…EPRLPLEGRD (65 aa)). Low complexity predominate over residues 83 to 97 (QPLDAPDPALSAAEA). Residues 98 to 138 (RAAHTEAAKPARAAEETQADRASADEHPAASEPRLPLEGRD) are compositionally biased toward basic and acidic residues.

Belongs to the TatB family. In terms of assembly, the Tat system comprises two distinct complexes: a TatABC complex, containing multiple copies of TatA, TatB and TatC subunits, and a separate TatA complex, containing only TatA subunits. Substrates initially bind to the TatABC complex, which probably triggers association of the separate TatA complex to form the active translocon.

It localises to the cell inner membrane. In terms of biological role, part of the twin-arginine translocation (Tat) system that transports large folded proteins containing a characteristic twin-arginine motif in their signal peptide across membranes. Together with TatC, TatB is part of a receptor directly interacting with Tat signal peptides. TatB may form an oligomeric binding site that transiently accommodates folded Tat precursor proteins before their translocation. The protein is Sec-independent protein translocase protein TatB of Erythrobacter litoralis (strain HTCC2594).